A 384-amino-acid polypeptide reads, in one-letter code: S-adenosylmethionine synthase (384 aa).

His15 provides a ligand contact to ATP. Asp17 is a Mg(2+) binding site. A K(+)-binding site is contributed by Glu43. L-methionine contacts are provided by Glu56 and Gln99. The tract at residues 99-109 is flexible loop; it reads QSPDINQGVDR. Residues 164-166, 230-231, Asp239, 245-246, Ala262, and Lys266 contribute to the ATP site; these read DAK, RF, and RK. Asp239 lines the L-methionine pocket. An L-methionine-binding site is contributed by Lys270.

Belongs to the AdoMet synthase family. Homotetramer; dimer of dimers. The cofactor is Mg(2+). It depends on K(+) as a cofactor.

The protein resides in the cytoplasm. It carries out the reaction L-methionine + ATP + H2O = S-adenosyl-L-methionine + phosphate + diphosphate. Its pathway is amino-acid biosynthesis; S-adenosyl-L-methionine biosynthesis; S-adenosyl-L-methionine from L-methionine: step 1/1. Catalyzes the formation of S-adenosylmethionine (AdoMet) from methionine and ATP. The overall synthetic reaction is composed of two sequential steps, AdoMet formation and the subsequent tripolyphosphate hydrolysis which occurs prior to release of AdoMet from the enzyme. The chain is S-adenosylmethionine synthase from Klebsiella pneumoniae (strain 342).